Reading from the N-terminus, the 106-residue chain is Glycoprotein GP16 (106 aa).

Post-translationally, glycosylated.

It localises to the host cytoplasm. Functionally, may be involved in formation or transport of the nucleocapsid-containing vesicles around the nuclear membrane. This chain is Glycoprotein GP16 (GP16), found in Autographa californica nuclear polyhedrosis virus (AcMNPV).